A 577-amino-acid chain; its full sequence is Sensor histidine kinase YesM (577 aa).

Over 1–17 the chain is Cytoplasmic; the sequence is MKKRVAGWYRRMKIKDK. Residues 18–38 form a helical membrane-spanning segment; the sequence is LFVFLSLIMAVSFLFVYSGVQ. The Extracellular segment spans residues 39–286; the sequence is YAFHVYDEQI…PFDQMFAKIS (248 aa). A helical membrane pass occupies residues 287-307; that stretch reads FMKTVIGTCFLLFFCVVLLFG. Residues 308–577 are Cytoplasmic-facing; sequence RKIANSITEP…ITIPCRNEVV (270 aa). The HAMP domain occupies 312–368; sequence NSITEPIEQLVTAMKSVQHSGIEAGVSLSLPEHTQDEAGMLNRHFTVMMKRINELME. Residues 365-574 enclose the Histidine kinase domain; that stretch reads ELMEENVEKQ…RIVITIPCRN (210 aa). Phosphohistidine; by autocatalysis is present on histidine 392.

Its subcellular location is the cell membrane. The catalysed reaction is ATP + protein L-histidine = ADP + protein N-phospho-L-histidine.. Functionally, member of the two-component regulatory system YesM/YesN. Probably activates YesN by phosphorylation. This Bacillus subtilis (strain 168) protein is Sensor histidine kinase YesM (yesM).